Consider the following 479-residue polypeptide: Glutamyl-tRNA(Gln) amidotransferase subunit A (479 aa).

Residues K71 and S146 each act as charge relay system in the active site. The active-site Acyl-ester intermediate is the S170.

It belongs to the amidase family. GatA subfamily. As to quaternary structure, heterotrimer of A, B and C subunits.

It carries out the reaction L-glutamyl-tRNA(Gln) + L-glutamine + ATP + H2O = L-glutaminyl-tRNA(Gln) + L-glutamate + ADP + phosphate + H(+). Its function is as follows. Allows the formation of correctly charged Gln-tRNA(Gln) through the transamidation of misacylated Glu-tRNA(Gln) in organisms which lack glutaminyl-tRNA synthetase. The reaction takes place in the presence of glutamine and ATP through an activated gamma-phospho-Glu-tRNA(Gln). This chain is Glutamyl-tRNA(Gln) amidotransferase subunit A, found in Lactobacillus johnsonii (strain CNCM I-12250 / La1 / NCC 533).